Here is a 448-residue protein sequence, read N- to C-terminus: DNA repair protein RadA (448 aa).

The C4-type zinc-finger motif lies at 10–27 (CQHCGFTSPKWLGKCVQC). 96–103 (GSPGVGKS) is a binding site for ATP. Residues 253 to 257 (KNRFG) carry the RadA KNRFG motif motif. The tract at residues 351 to 448 (DVFINVSGGI…NVVGKIVEWM (98 aa)) is lon-protease-like.

Belongs to the RecA family. RadA subfamily.

Functionally, DNA-dependent ATPase involved in processing of recombination intermediates, plays a role in repairing DNA breaks. Stimulates the branch migration of RecA-mediated strand transfer reactions, allowing the 3' invading strand to extend heteroduplex DNA faster. Binds ssDNA in the presence of ADP but not other nucleotides, has ATPase activity that is stimulated by ssDNA and various branched DNA structures, but inhibited by SSB. Does not have RecA's homology-searching function. In Helicobacter pylori (strain J99 / ATCC 700824) (Campylobacter pylori J99), this protein is DNA repair protein RadA.